The sequence spans 1002 residues: Calcium-transporting ATPase sarcoplasmic/endoplasmic reticulum type (1002 aa).

The Cytoplasmic segment spans residues M1–S48. Residues I49–A69 traverse the membrane as a helical segment. Residues I70–V89 are Lumenal-facing. A helical transmembrane segment spans residues E90–R110. Over N111–L253 the chain is Cytoplasmic. The helical transmembrane segment at D254 to A273 threads the bilayer. The Lumenal segment spans residues I274–Y295. Residues F296 to A313 traverse the membrane as a helical segment. 4 residues coordinate Ca(2+): V304, A305, I307, and E309. Topologically, residues V314–M757 are cytoplasmic. The active-site 4-aspartylphosphate intermediate is the D351. Mg(2+)-binding residues include D703 and D707. The chain crosses the membrane as a helical span at residues K758 to L777. Ca(2+) is bound by residues N768 and E771. Residues T778–L787 lie on the Lumenal side of the membrane. The chain crosses the membrane as a helical span at residues I788–G808. Residues N796, T799, and D800 each contribute to the Ca(2+) site. At F809 to L828 the chain is on the cytoplasmic side. The chain crosses the membrane as a helical span at residues I829 to A851. Topologically, residues A852–M897 are lumenal. The chain crosses the membrane as a helical span at residues T898 to S917. Ca(2+) is bound at residue E908. The Cytoplasmic segment spans residues E918–N930. The helical transmembrane segment at L931–Y949 threads the bilayer. Topologically, residues V950–A964 are lumenal. A helical membrane pass occupies residues E965–K985. Residues F986–W1002 are Cytoplasmic-facing.

The protein belongs to the cation transport ATPase (P-type) (TC 3.A.3) family.

Its subcellular location is the endoplasmic reticulum membrane. The protein localises to the sarcoplasmic reticulum membrane. It carries out the reaction Ca(2+)(in) + ATP + H2O = Ca(2+)(out) + ADP + phosphate + H(+). Its function is as follows. This magnesium-dependent enzyme catalyzes the hydrolysis of ATP coupled with the transport of calcium. This chain is Calcium-transporting ATPase sarcoplasmic/endoplasmic reticulum type, found in Drosophila pseudoobscura pseudoobscura (Fruit fly).